The sequence spans 1682 residues: Merozoite surface protein 1 (1682 aa).

A signal peptide spans Met-1–Cys-19. Residues Ala-68 to Ala-110 form a disordered region. Residues Asn-233, Asn-462, Asn-528, and Asn-599 are each glycosylated (N-linked (GlcNAc...) asparagine). The disordered stretch occupies residues Ser-696–Thr-729. Asn-785, Asn-881, Asn-901, Asn-947, Asn-1071, and Asn-1178 each carry an N-linked (GlcNAc...) asparagine glycan. Residues Ile-870–Ala-918 are disordered. Residues Thr-871–Asn-909 show a composition bias toward low complexity. 2 disordered regions span residues Thr-1212–Pro-1241 and Lys-1433–Lys-1453. Over residues Val-1227–Pro-1241 the composition is skewed to polar residues. Residues Ser-1437–Pro-1446 show a composition bias toward pro residues. N-linked (GlcNAc...) asparagine glycosylation occurs at Asn-1569. 2 EGF-like domains span residues His-1573–Pro-1613 and Asn-1614–Ser-1661. 6 cysteine pairs are disulfide-bonded: Cys-1575–Cys-1586, Cys-1580–Cys-1596, Cys-1598–Cys-1609, Cys-1617–Cys-1630, Cys-1624–Cys-1644, and Cys-1646–Cys-1660. Residue Ser-1661 is the site of GPI-anchor amidated serine attachment. Positions Ser-1662–Ile-1682 are cleaved as a propeptide — removed in mature form.

Forms a complex composed of subunits p83, p30, p38, and p42 which remain non-covalently associated; the complex is formed at the merozoite surface prior to egress from host erythrocytes. Forms a complex composed of processed MSP1 subunits, MSP6 subunit p36 and MSP7; the complex is formed at the merozoite surface prior to egress from host erythrocytes. Within the complex, interacts (via subunit p38) with MSP6 subunit p36 and (via subunits p83, p30 and p38) with MSP7 (via subunit p22). Forms a complex composed of MSP1, MSP6, DBLMSP1 and DBLMSP2. Within the complex, interacts (via subunit p38) with DBLMSP1 and DBLMSP2. Forms a complex composed of MSP1, and rhoptry proteins RhopH3, RAP1 and CLAG9/RhopH3. Within the complex, interacts (via subunits p42 and p19) with RhopH3 (via C-terminus). Forms a complex composed of MSP1, MSP6, MSP7, MSP9 and MSP3; within the complex, MSP6 and MSP9 mediate the binding to the host erythrocyte. Interacts (via subunits p19 and p42) with MSP9; the interaction is direct; MSP1 subunits p19 or p42, and MSP9 form a co-ligand complex that interacts with host SLC4A1/Band 3 protein. May interact with PFD6. Interacts with host spectrin. In terms of assembly, interacts with host glycophorin GYPA in a sialic acid-independent manner. As to quaternary structure, interacts with host proinflammatory cytokine S100P; the interaction blocks S100P inflammatory and chemotactic activities. Interacts with host SLC4A1/Band 3 (via 5ABC region) on the host erythrocyte surface in a sialic acid-independent manner. Post-translationally, the p190 precursor is cleaved by SUB1 prior to merozoite egress into 4 subunits p83, p30, p38, and p42 which remain non-covalently associated. SUB1-mediated proteolytic cleavage occurs in an orderly manner; the first cleavage occurs at the p30/p38 site, followed by cleavage at the p83/p30 site, the last cleavage occurs at the p38/p42 site. The order of cleavage is essential for parasite viability. SUB1-mediated processing is essential for merozoite egress. In a second processing step during erythrocyte invasion, p42 is cleaved by SUB2 into p33 and p19; the latter remains attached to the merozoite surface via its GPI-anchor and is endocytosed during the subsequent ring stage.

The protein resides in the cell membrane. Its subcellular location is the secreted. It localises to the vacuole membrane. Functionally, during the asexual blood stage, involved in merozoite egress from host erythrocytes possibly via its interaction with the host cytoskeleton protein spectrin resulting in the destabilization of the host cytoskeleton and thus leading to erythrocyte cell membrane rupture. Involved in the binding to host erythrocytes and is required for host erythrocyte invasion. In terms of biological role, by binding to host proinflammatory cytokine S100P may interfere with host immune responses. Involved in merozoite invasion of host erythrocytes. May play a role in the biogenesis and/or function of the food vacuole during the intraerythrocytic development. This Plasmodium falciparum (isolate ro-33 / Ghana) protein is Merozoite surface protein 1.